A 486-amino-acid chain; its full sequence is NADH-ubiquinone oxidoreductase chain 4 (486 aa).

13 consecutive transmembrane segments (helical) span residues 26–46 (HFYL…YINF), 76–96 (GLLF…VLLI), 113–132 (LYYT…FWAL), 134–156 (YISF…HIYG), 165–185 (FYVL…IVVI), 209–231 (IIWL…HVWL), 239–259 (PLAG…YAIL), 271–291 (ILYT…TSLA), 298–318 (LKVI…LGVC), 329–349 (IVLG…VGGI), 372–392 (LATY…TGNF), 407–427 (PIIG…QLKL), and 452–472 (FIMN…QIMY).

It belongs to the complex I subunit 4 family. Complex I is composed of 37 different subunits.

Its subcellular location is the mitochondrion membrane. It carries out the reaction a ubiquinone + NADH + 5 H(+)(in) = a ubiquinol + NAD(+) + 4 H(+)(out). Its function is as follows. Core subunit of the mitochondrial membrane respiratory chain NADH dehydrogenase (Complex I) that is believed to belong to the minimal assembly required for catalysis. Complex I functions in the transfer of electrons from NADH to the respiratory chain. The immediate electron acceptor for the enzyme is believed to be ubiquinone. This chain is NADH-ubiquinone oxidoreductase chain 4 (ND4), found in Yarrowia lipolytica (strain CLIB 122 / E 150) (Yeast).